Reading from the N-terminus, the 486-residue chain is MRKVYIFDTTLRDGEQTPGVSLTVEEKVEIAKQLAKLNVDVIEAGFPIASEGEFKAVKKIATEVEDPTIAALARAVEKDIDRAGEALRNAEKNRIHTFIATSPIHMKYKLRKEPEEVKKLAVKAVEHATKYTEDVEFSAEDATRSDWDFLVEVYEAVIDAGATVINVPDTVGYATPEEFYELVRYLRRNISNIKGVQISVHCHDDLGLAVANSLSAIRAGADQVEVTVNGIGERAGNAALEEVIVALDVRRDFYKVKTDVNLKEIARTSKLVSHLTGIEVPPNKAIVGGNAFAHESGIHQDGVLKERTTYEIIDPKKLGFSGSKIVLGKHSGRHAFRKKLEELGYSLTEEHLERAFKKFKDIADRKRWITDTDIEAIIQEELTKSNGKLKVEIIHVTSGKVSTATVRISMNGEERIEVAWFKNGPIDALFSAINKALGEEFKLREYRVSSVTSGKDSLGEVLVRVEVNGEIFVGRGLSTDIIEASA.

Positions 4–266 constitute a Pyruvate carboxyltransferase domain; sequence VYIFDTTLRD…KTDVNLKEIA (263 aa). Mn(2+) is bound by residues Asp-13, His-201, His-203, and Asn-237. Positions 390–486 are regulatory domain; the sequence is KVEIIHVTSG…LSTDIIEASA (97 aa).

Belongs to the alpha-IPM synthase/homocitrate synthase family. LeuA type 1 subfamily. Mn(2+) is required as a cofactor.

It localises to the cytoplasm. The catalysed reaction is 3-methyl-2-oxobutanoate + acetyl-CoA + H2O = (2S)-2-isopropylmalate + CoA + H(+). It functions in the pathway amino-acid biosynthesis; L-leucine biosynthesis; L-leucine from 3-methyl-2-oxobutanoate: step 1/4. Its function is as follows. Catalyzes the condensation of the acetyl group of acetyl-CoA with 3-methyl-2-oxobutanoate (2-ketoisovalerate) to form 3-carboxy-3-hydroxy-4-methylpentanoate (2-isopropylmalate). The polypeptide is 2-isopropylmalate synthase (Pyrococcus abyssi (strain GE5 / Orsay)).